We begin with the raw amino-acid sequence, 367 residues long: Glutamate 5-kinase (367 aa).

Residue Lys-10 coordinates ATP. Substrate-binding residues include Ser-50, Asp-137, and Asn-149. ATP is bound by residues Thr-169–Asp-170 and Thr-211–Lys-217. The PUA domain maps to Ala-275 to Glu-353.

It belongs to the glutamate 5-kinase family.

The protein localises to the cytoplasm. The enzyme catalyses L-glutamate + ATP = L-glutamyl 5-phosphate + ADP. The protein operates within amino-acid biosynthesis; L-proline biosynthesis; L-glutamate 5-semialdehyde from L-glutamate: step 1/2. Catalyzes the transfer of a phosphate group to glutamate to form L-glutamate 5-phosphate. This chain is Glutamate 5-kinase, found in Salmonella agona (strain SL483).